Consider the following 359-residue polypeptide: MDSLALAPQVYSRKDKSLGVLVANFLTLYNRPDVDLFGLDDAAAKLGVERRRIYDVVNILESIGLVARSGKNQYSWKGFGAVPRALSELKEEGMKEKFAIVPFVAKSEMVVYEKEGEESFMLSPDDQEFSPSPRPDNRKERTLWLLAQNFVKLFLCSDDDLVTFDSATKALLNESQDMNMRKKVRRLYDIANVFSSMKLIEKTHVPETKKPAYRWLGSKTIFENRFIDGSASLCDRNVPKKRAFGTELTNVNAKRNKSGCSKEDSKRNGNQNTSIVIKQEQCDDVKPDVKNFASGSSTPAGTSESNDMGNNIRPRGRLGVIEALSTLYQPSYCNPELLGLFAHYNETFRSYQEEFGREK.

DNA-binding regions lie at residues 13 to 78 (RKDK…SWKG) and 138 to 217 (RKER…RWLG). Disordered stretches follow at residues 255-274 (RNKS…QNTS) and 288-313 (DVKN…NNIR). Residues 293–309 (ASGSSTPAGTSESNDMG) show a composition bias toward polar residues.

The protein belongs to the E2F/DP family. As to quaternary structure, monomer. No interactions with DPA or E2FA. Preferentially expressed in proliferating tissues. Highly expressed in young stalk and young flowers. Lower expression in young leaves and mature flowers. Detected in cotyledonary vascular tissues, the shoot apical meristem, the base of trichomes, the fully developed stomata, the central root cylinder and in the columella of lateral roots but not in the primary root tips or in the leaf epidermal cells.

The protein localises to the nucleus. In terms of biological role, inhibitor of E2F-dependent regulation of gene expression. Binds specifically the E2 recognition site as a monomer without interacting with DP proteins. May be up-regulating E2FA and down-regulating repressors of cell cycle progression. Promotes cell proliferation and represses cell elongation. Regulated by proteolysis via a ubiquitin-proteasome pathway. The sequence is that of E2F transcription factor-like E2FD (E2FD) from Arabidopsis thaliana (Mouse-ear cress).